Reading from the N-terminus, the 96-residue chain is Small ribosomal subunit protein bS6 (96 aa).

Belongs to the bacterial ribosomal protein bS6 family.

Functionally, binds together with bS18 to 16S ribosomal RNA. The protein is Small ribosomal subunit protein bS6 of Carboxydothermus hydrogenoformans (strain ATCC BAA-161 / DSM 6008 / Z-2901).